The primary structure comprises 208 residues: Large ribosomal subunit protein bL25 (208 aa).

Positions 185–195 (DLEEETGEAEG) are enriched in acidic residues. A disordered region spans residues 185 to 208 (DLEEETGEAEGETAAAPAEEGAES). A compositionally biased stretch (low complexity) spans 196–208 (ETAAAPAEEGAES).

It belongs to the bacterial ribosomal protein bL25 family. CTC subfamily. As to quaternary structure, part of the 50S ribosomal subunit; part of the 5S rRNA/L5/L18/L25 subcomplex. Contacts the 5S rRNA. Binds to the 5S rRNA independently of L5 and L18.

Its function is as follows. This is one of the proteins that binds to the 5S RNA in the ribosome where it forms part of the central protuberance. The protein is Large ribosomal subunit protein bL25 of Rhodococcus opacus (strain B4).